The sequence spans 112 residues: Large ribosomal subunit protein eL30x (112 aa).

This sequence belongs to the eukaryotic ribosomal protein eL30 family.

In Arabidopsis thaliana (Mouse-ear cress), this protein is Large ribosomal subunit protein eL30x (RPL30C).